Here is a 336-residue protein sequence, read N- to C-terminus: Calcium uniporter regulatory subunit MCUb, mitochondrial (336 aa).

A mitochondrion-targeting transit peptide spans 1 to 35 (MLQRGLWPWRTRLLPTPGTWRPARPWPLPPPPQVL). A coiled-coil region spans residues 179–210 (ESQKKREHHLLEKIDHLKEQLQPLEQVKAGIE). Helical transmembrane passes span 220-240 (LLWA…WLTW) and 250-270 (PVTY…FIVT). A coiled-coil region spans residues 297–323 (FDVQQYNKLKEDLAKAKESLKQARHSL).

Belongs to the MCU (TC 1.A.77) family. Homooligomer. Associates with the uniplex complex, composed of MCU, MICU1, MICU2 and EMRE/SMDT1, inhibiting its activity.

The protein localises to the mitochondrion inner membrane. Negative regulator of the mitochondrial calcium uniporter (MCU), a channel that mediates calcium uptake into the mitochondrial matrix. MCUB is required to limit mitochondrial calcium overload during stress. Acts as a dominant-negative regulator that displaces MCU from the functional uniplex complex and thereby decreases the association of calcium sensors MICU1 and MICU2, preventing channel gating. Mitochondrial calcium homeostasis plays key roles in mitochondrial metabolism. Acts as an important regulator of mitochondrial metabolism in response to stress in muscle cells: induced in response to fasting, leading to restrict mitochondrial calcium uptake, resulting in reprogramming of mitochondria toward fatty acid oxidation preference. Acts as a regulator of macrophage polarization during skeletal muscle regeneration: inhibition of mitochondrial calcium uptake drives differentiation of macrophages with anti-inflammatory profile, promoting the differentiation and fusion of satellite cells. This chain is Calcium uniporter regulatory subunit MCUb, mitochondrial, found in Homo sapiens (Human).